Here is a 706-residue protein sequence, read N- to C-terminus: Fatty acid oxidation complex subunit alpha (706 aa).

The interval methionine 1–proline 188 is enoyl-CoA hydratase. A 3-hydroxyacyl-CoA dehydrogenase region spans residues lysine 308–glutamate 706.

It in the N-terminal section; belongs to the enoyl-CoA hydratase/isomerase family. This sequence in the central section; belongs to the 3-hydroxyacyl-CoA dehydrogenase family. In terms of assembly, heterotetramer of two alpha chains (FadJ) and two beta chains (FadI).

It localises to the cytoplasm. It catalyses the reaction a (3S)-3-hydroxyacyl-CoA = a (2E)-enoyl-CoA + H2O. It carries out the reaction a 4-saturated-(3S)-3-hydroxyacyl-CoA = a (3E)-enoyl-CoA + H2O. The catalysed reaction is a (3S)-3-hydroxyacyl-CoA + NAD(+) = a 3-oxoacyl-CoA + NADH + H(+). The enzyme catalyses (3S)-3-hydroxybutanoyl-CoA = (3R)-3-hydroxybutanoyl-CoA. It functions in the pathway lipid metabolism; fatty acid beta-oxidation. Functionally, catalyzes the formation of a hydroxyacyl-CoA by addition of water on enoyl-CoA. Also exhibits 3-hydroxyacyl-CoA epimerase and 3-hydroxyacyl-CoA dehydrogenase activities. This is Fatty acid oxidation complex subunit alpha from Shewanella loihica (strain ATCC BAA-1088 / PV-4).